Here is a 270-residue protein sequence, read N- to C-terminus: Release factor glutamine methyltransferase (270 aa).

S-adenosyl-L-methionine-binding positions include 113-117 (GTGSG), Asp136, and Asn177. Position 177–180 (177–180 (NPPY)) interacts with substrate.

The protein belongs to the protein N5-glutamine methyltransferase family. PrmC subfamily.

The catalysed reaction is L-glutaminyl-[peptide chain release factor] + S-adenosyl-L-methionine = N(5)-methyl-L-glutaminyl-[peptide chain release factor] + S-adenosyl-L-homocysteine + H(+). Its function is as follows. Methylates the class 1 translation termination release factors RF1/PrfA and RF2/PrfB on the glutamine residue of the universally conserved GGQ motif. The protein is Release factor glutamine methyltransferase of Lactococcus lactis subsp. lactis (strain IL1403) (Streptococcus lactis).